A 244-amino-acid chain; its full sequence is Maintenance of ploidy protein mob2 (244 aa).

A disordered region spans residues 14 to 45; sequence NRSKRHQNLSDASSSSGSFSKKSSTSQLVRTG. Low complexity predominate over residues 23–39; that stretch reads SDASSSSGSFSKKSSTS. Phosphoserine occurs at positions 46 and 48.

This sequence belongs to the MOB1/phocein family. As to quaternary structure, interacts with orb6.

The protein resides in the cytoplasm. Its subcellular location is the cell cortex. In terms of biological role, required for coordinating polarized cell growth during interphase with the onset of mitosis. This Schizosaccharomyces pombe (strain 972 / ATCC 24843) (Fission yeast) protein is Maintenance of ploidy protein mob2 (mob2).